A 591-amino-acid chain; its full sequence is DEAD-box ATP-dependent RNA helicase 30 (591 aa).

A disordered region spans residues 1-109; it reads MSSYDRRFAD…GRGGSSKREL (109 aa). The span at 72–103 shows a compositional bias: gly residues; sequence FSVGRGGGRGGYGQYGDRNGGGNWGGGGGRGG. The Q motif motif lies at 165–193; sequence KMFQDANFPDNILEAIAKLGFTEPTPIQA. The 176-residue stretch at 196 to 371 folds into the Helicase ATP-binding domain; sequence WPMALKGRDL…RQFLRDPYKA (176 aa). 209-216 contributes to the ATP binding site; sequence AETGSGKT. The DEAD box signature appears at 319–322; that stretch reads DEAD. Positions 399 to 544 constitute a Helicase C-terminal domain; sequence RLLTLLKQLM…VVPPTLSALV (146 aa). Positions 547–591 are disordered; that stretch reads SGSGYGGSGGGRNFRPRGGGRGGGFGDKRSRSTSNFVPHGGKRTW. A compositionally biased stretch (gly residues) spans 549 to 571; sequence SGYGGSGGGRNFRPRGGGRGGGF.

The protein belongs to the DEAD box helicase family. DDX5/DBP2 subfamily.

It localises to the nucleus. The enzyme catalyses ATP + H2O = ADP + phosphate + H(+). Its function is as follows. ATP-dependent RNA helicase involved nonsense-mediated mRNA decay and ribosome biogenesis through rRNA processing. This chain is DEAD-box ATP-dependent RNA helicase 30 (RH30), found in Arabidopsis thaliana (Mouse-ear cress).